The chain runs to 645 residues: Macrolide export ATP-binding/permease protein MacB (645 aa).

Residues Ile6 to Lys244 enclose the ABC transporter domain. Gly42–Ser49 is an ATP binding site. 4 consecutive transmembrane segments (helical) span residues Ala271 to Gly291, Phe520 to Met540, Val577 to Ile597, and Pro608 to Leu628.

The protein belongs to the ABC transporter superfamily. Macrolide exporter (TC 3.A.1.122) family. In terms of assembly, homodimer.

It is found in the cell inner membrane. Functionally, non-canonical ABC transporter that contains transmembrane domains (TMD), which form a pore in the inner membrane, and an ATP-binding domain (NBD), which is responsible for energy generation. Confers resistance against macrolides. This Hyphomonas neptunium (strain ATCC 15444) protein is Macrolide export ATP-binding/permease protein MacB.